Here is a 665-residue protein sequence, read N- to C-terminus: DNA ligase (665 aa).

Residues 31-35 (DEEFD), 80-81 (SL), and Glu-111 each bind NAD(+). Catalysis depends on Lys-113, which acts as the N6-AMP-lysine intermediate. Arg-134, Glu-171, Lys-287, and Lys-311 together coordinate NAD(+). Positions 405, 408, 423, and 429 each coordinate Zn(2+). Positions 588–665 (FTNHAFQGKI…NEKEFISLCH (78 aa)) constitute a BRCT domain.

Belongs to the NAD-dependent DNA ligase family. LigA subfamily. Requires Mg(2+) as cofactor. It depends on Mn(2+) as a cofactor.

It catalyses the reaction NAD(+) + (deoxyribonucleotide)n-3'-hydroxyl + 5'-phospho-(deoxyribonucleotide)m = (deoxyribonucleotide)n+m + AMP + beta-nicotinamide D-nucleotide.. Functionally, DNA ligase that catalyzes the formation of phosphodiester linkages between 5'-phosphoryl and 3'-hydroxyl groups in double-stranded DNA using NAD as a coenzyme and as the energy source for the reaction. It is essential for DNA replication and repair of damaged DNA. The polypeptide is DNA ligase (Protochlamydia amoebophila (strain UWE25)).